Consider the following 1192-residue polypeptide: Protein pangolin, isoform J (1192 aa).

The Nuclear localization signal signature appears at 351 to 357 (LGLPSEE). The segment at 691 to 713 (AKHTSNAQSNESKETTNDKKKPH) is disordered. The HMG box DNA-binding region spans 714-782 (IKKPLNAFML…LHMELYPGWS (69 aa)). Disordered regions lie at residues 790–812 (VSKKKKRKKDRSTTDSGGNNMKK), 847–916 (PAED…SPST), 955–986 (QRPTLVSTSGSSSGSTSSISTTPNTSSTVSPV), and 1136–1192 (QLNN…ISVS). Over residues 862 to 871 (SDDDEDDYDD) the composition is skewed to acidic residues. 2 stretches are compositionally biased toward low complexity: residues 898 to 915 (SMPSPGCLSGLSSLQSPS) and 957 to 986 (PTLVSTSGSSSGSTSSISTTPNTSSTVSPV). Composition is skewed to polar residues over residues 1140 to 1162 (RTENPNRSEQTMLSVSNHSVNSS) and 1170 to 1192 (SQAIVSSNPPNAGSSDNGVISVS).

It belongs to the TCF/LEF family. As to quaternary structure, binds to the beta-catenin homolog arm or to gro.

Its subcellular location is the nucleus. Segment polarity protein. Functions together with arm to transduce the Wingless (Wg) signal in embryos and in developing adult tissues. Acts as a transcriptional activator, but in the absence of arm, it binds to gro and acts as a transcriptional repressor of wg-responsive genes. This is Protein pangolin, isoform J from Drosophila melanogaster (Fruit fly).